A 448-amino-acid polypeptide reads, in one-letter code: UDP-N-acetylmuramate--L-alanine ligase (448 aa).

An ATP-binding site is contributed by 118–124 (GTHGKTT).

This sequence belongs to the MurCDEF family.

Its subcellular location is the cytoplasm. It catalyses the reaction UDP-N-acetyl-alpha-D-muramate + L-alanine + ATP = UDP-N-acetyl-alpha-D-muramoyl-L-alanine + ADP + phosphate + H(+). Its pathway is cell wall biogenesis; peptidoglycan biosynthesis. In terms of biological role, cell wall formation. The chain is UDP-N-acetylmuramate--L-alanine ligase from Flavobacterium psychrophilum (strain ATCC 49511 / DSM 21280 / CIP 103535 / JIP02/86).